The primary structure comprises 101 residues: Small ribosomal subunit protein uS14 (101 aa).

This sequence belongs to the universal ribosomal protein uS14 family. As to quaternary structure, part of the 30S ribosomal subunit. Contacts proteins S3 and S10.

In terms of biological role, binds 16S rRNA, required for the assembly of 30S particles and may also be responsible for determining the conformation of the 16S rRNA at the A site. This Actinobacillus pleuropneumoniae serotype 3 (strain JL03) protein is Small ribosomal subunit protein uS14.